The sequence spans 193 residues: Recombination protein RecR (193 aa).

The C4-type zinc-finger motif lies at 61 to 76 (CASCNALSESEICEIC). The Toprim domain maps to 84–170 (SQLCMVLHPR…TFTKIAQGVP (87 aa)).

The protein belongs to the RecR family.

Functionally, may play a role in DNA repair. It seems to be involved in an RecBC-independent recombinational process of DNA repair. It may act with RecF and RecO. In Helicobacter pylori (strain Shi470), this protein is Recombination protein RecR.